Here is a 145-residue protein sequence, read N- to C-terminus: Large-conductance mechanosensitive channel (145 aa).

The next 2 membrane-spanning stretches (helical) occupy residues 16–36 (VVDL…VTSF) and 83–103 (GVFI…FMVI).

Belongs to the MscL family. In terms of assembly, homopentamer.

Its subcellular location is the cell inner membrane. Its function is as follows. Channel that opens in response to stretch forces in the membrane lipid bilayer. May participate in the regulation of osmotic pressure changes within the cell. In Geobacter metallireducens (strain ATCC 53774 / DSM 7210 / GS-15), this protein is Large-conductance mechanosensitive channel.